A 315-amino-acid polypeptide reads, in one-letter code: Dihydroorotate dehydrogenase (fumarate) (315 aa).

Residues K46, 70-74 (NSMGL), and N130 each bind substrate. An FMN-binding site is contributed by 46-47 (KS). Residue N130 coordinates FMN. The active-site Nucleophile is the C133. K167 and I195 together coordinate FMN. 196–197 (NS) provides a ligand contact to substrate. FMN is bound by residues G224, 252–253 (GG), and 274–275 (GT).

The protein belongs to the dihydroorotate dehydrogenase family. Type 1 subfamily. Homodimer. FMN is required as a cofactor.

The protein resides in the cytoplasm. It catalyses the reaction (S)-dihydroorotate + fumarate = orotate + succinate. It participates in pyrimidine metabolism; UMP biosynthesis via de novo pathway. Functionally, catalyzes the conversion of dihydroorotate to orotate with fumarate as the electron acceptor. The polypeptide is Dihydroorotate dehydrogenase (fumarate) (URA1) (Kluyveromyces lactis (strain ATCC 8585 / CBS 2359 / DSM 70799 / NBRC 1267 / NRRL Y-1140 / WM37) (Yeast)).